Consider the following 61-residue polypeptide: Small ribosomal subunit protein uS14B (61 aa).

Zn(2+) is bound by residues Cys24, Cys27, Cys40, and Cys43.

This sequence belongs to the universal ribosomal protein uS14 family. Zinc-binding uS14 subfamily. Part of the 30S ribosomal subunit. Contacts proteins S3 and S10. The cofactor is Zn(2+).

Binds 16S rRNA, required for the assembly of 30S particles and may also be responsible for determining the conformation of the 16S rRNA at the A site. In Mycobacterium ulcerans (strain Agy99), this protein is Small ribosomal subunit protein uS14B.